The chain runs to 125 residues: MNKTVGPPTITPTGLSGGMNSTTGSSSTSNIYSSYYKAIDQFQNKNTTDKDLHETLKQGPISSNLFYNNFLNELNNKNNNFNNNNNNNNNNNSNSNNNNNNNSNIVYSNNMSNNYNNNYNNRFKK.

Disordered regions lie at residues 1 to 27 and 76 to 125; these read MNKT…GSSS and NKNN…RFKK. The segment covering 18–27 has biased composition (low complexity); that stretch reads GMNSTTGSSS.

This is an uncharacterized protein from Dictyostelium discoideum (Social amoeba).